The primary structure comprises 159 residues: MAYTVSSANQLVYLGSVWADPLELQNLCTSALGNQFQTQQARTTVQQQFSDVWKTIPTATVRFPATGFKVFRYNAVLDSLVSALLGAFDTRNRIIEVENPQNPTTAETLDATKRVDDATVAIRASISNLMNELIRGTGMYNQALFEMASGFTWATIPYT.

At alanine 2 the chain carries N-acetylalanine; by host.

This sequence belongs to the virgaviridae capsid protein family.

It is found in the virion. In terms of biological role, capsid protein self-assembles to form rod-shaped virions about 18 nm in diameter with a central canal enclosing the viral genomic RNA. The chain is Capsid protein (CP) from Capsicum (peppers).